The chain runs to 109 residues: Large ribosomal subunit protein uL24 (109 aa).

Belongs to the universal ribosomal protein uL24 family. As to quaternary structure, part of the 50S ribosomal subunit.

One of two assembly initiator proteins, it binds directly to the 5'-end of the 23S rRNA, where it nucleates assembly of the 50S subunit. Its function is as follows. One of the proteins that surrounds the polypeptide exit tunnel on the outside of the subunit. In Geotalea uraniireducens (strain Rf4) (Geobacter uraniireducens), this protein is Large ribosomal subunit protein uL24.